Consider the following 174-residue polypeptide: Ferritin, heavy subunit (174 aa).

The region spanning 7–156 (QNFHKDCEAA…DWVTNLRRLG (150 aa)) is the Ferritin-like diiron domain. Residues Glu-24, Glu-59, His-62, Glu-104, and Gln-138 each contribute to the Fe cation site.

Belongs to the ferritin family. As to quaternary structure, in liver, forms a heteromer consisting of middle and heavy subunits. The functional molecule forms a roughly spherical shell with a diameter of 12 nm and contains a central cavity into which the insoluble mineral iron core is deposited. In terms of tissue distribution, liver (at protein level).

It catalyses the reaction 4 Fe(2+) + O2 + 4 H(+) = 4 Fe(3+) + 2 H2O. Functionally, stores iron in a soluble, non-toxic, readily available form. Important for iron homeostasis. Has ferroxidase activity. Iron is taken up in the ferrous form and deposited as ferric hydroxides after oxidation. Also plays a role in delivery of iron to cells. Mediates iron uptake in capsule cells of the developing kidney. Delivery to lysosomes is mediated by the cargo receptor NCOA4 for autophagic degradation and release of iron. This is Ferritin, heavy subunit from Trematomus bernacchii (Emerald rockcod).